The primary structure comprises 289 residues: Lipoyl synthase 1 (289 aa).

The [4Fe-4S] cluster site is built by cysteine 33, cysteine 38, cysteine 44, cysteine 59, cysteine 63, cysteine 66, and serine 274. Residues 45 to 263 (FAGGTATFLI…RIGEEELGFL (219 aa)) enclose the Radical SAM core domain.

Belongs to the radical SAM superfamily. Lipoyl synthase family. [4Fe-4S] cluster is required as a cofactor.

Its subcellular location is the cytoplasm. It carries out the reaction [[Fe-S] cluster scaffold protein carrying a second [4Fe-4S](2+) cluster] + N(6)-octanoyl-L-lysyl-[protein] + 2 oxidized [2Fe-2S]-[ferredoxin] + 2 S-adenosyl-L-methionine + 4 H(+) = [[Fe-S] cluster scaffold protein] + N(6)-[(R)-dihydrolipoyl]-L-lysyl-[protein] + 4 Fe(3+) + 2 hydrogen sulfide + 2 5'-deoxyadenosine + 2 L-methionine + 2 reduced [2Fe-2S]-[ferredoxin]. It functions in the pathway protein modification; protein lipoylation via endogenous pathway; protein N(6)-(lipoyl)lysine from octanoyl-[acyl-carrier-protein]: step 2/2. Its function is as follows. Catalyzes the radical-mediated insertion of two sulfur atoms into the C-6 and C-8 positions of the octanoyl moiety bound to the lipoyl domains of lipoate-dependent enzymes, thereby converting the octanoylated domains into lipoylated derivatives. The chain is Lipoyl synthase 1 from Parasynechococcus marenigrum (strain WH8102).